The primary structure comprises 262 residues: Phosphonates import ATP-binding protein PhnC (262 aa).

One can recognise an ABC transporter domain in the interval 5–253 (IRVEKLAKTF…RFDHLYRSIN (249 aa)). ATP is bound at residue 37–44 (GPSGSGKS).

It belongs to the ABC transporter superfamily. Phosphonates importer (TC 3.A.1.9.1) family. In terms of assembly, the complex is composed of two ATP-binding proteins (PhnC), two transmembrane proteins (PhnE) and a solute-binding protein (PhnD).

The protein resides in the cell inner membrane. The enzyme catalyses phosphonate(out) + ATP + H2O = phosphonate(in) + ADP + phosphate + H(+). Its function is as follows. Part of the ABC transporter complex PhnCDE involved in phosphonates import. Responsible for energy coupling to the transport system. In Shigella dysenteriae serotype 1 (strain Sd197), this protein is Phosphonates import ATP-binding protein PhnC.